The sequence spans 307 residues: Coproporphyrin III ferrochelatase (307 aa).

Residues tyrosine 12, arginine 29, 45–46, serine 53, and tyrosine 124 each bind Fe-coproporphyrin III; that span reads RY. Fe(2+) is bound by residues histidine 181 and glutamate 263.

Belongs to the ferrochelatase family.

Its subcellular location is the cytoplasm. The catalysed reaction is Fe-coproporphyrin III + 2 H(+) = coproporphyrin III + Fe(2+). Its pathway is porphyrin-containing compound metabolism; protoheme biosynthesis. Its function is as follows. Involved in coproporphyrin-dependent heme b biosynthesis. Catalyzes the insertion of ferrous iron into coproporphyrin III to form Fe-coproporphyrin III. The protein is Coproporphyrin III ferrochelatase of Staphylococcus aureus (strain MRSA252).